A 346-amino-acid polypeptide reads, in one-letter code: tRNA N6-adenosine threonylcarbamoyltransferase (346 aa).

Residues His-111 and His-115 each coordinate Fe cation. Residues 134-138 (LVSGG), Asp-167, Gly-180, and Asn-279 each bind substrate. Asp-307 is a Fe cation binding site.

It belongs to the KAE1 / TsaD family. Fe(2+) is required as a cofactor.

The protein localises to the cytoplasm. The enzyme catalyses L-threonylcarbamoyladenylate + adenosine(37) in tRNA = N(6)-L-threonylcarbamoyladenosine(37) in tRNA + AMP + H(+). In terms of biological role, required for the formation of a threonylcarbamoyl group on adenosine at position 37 (t(6)A37) in tRNAs that read codons beginning with adenine. Is involved in the transfer of the threonylcarbamoyl moiety of threonylcarbamoyl-AMP (TC-AMP) to the N6 group of A37, together with TsaE and TsaB. TsaD likely plays a direct catalytic role in this reaction. This chain is tRNA N6-adenosine threonylcarbamoyltransferase, found in Burkholderia thailandensis (strain ATCC 700388 / DSM 13276 / CCUG 48851 / CIP 106301 / E264).